We begin with the raw amino-acid sequence, 459 residues long: GTPase Der (459 aa).

2 consecutive EngA-type G domains span residues 4–169 and 179–355; these read PLVA…PEVA and IAVA…AAHR. Residues 10–17, 57–61, 120–123, 185–192, 232–236, and 297–300 contribute to the GTP site; these read GRPNVGKS, DTGGL, NKCE, DTAGI, and NKWD. The 86-residue stretch at 356 to 441 folds into the KH-like domain; it reads KRIATSVVNE…PIRFRWRSKS (86 aa).

The protein belongs to the TRAFAC class TrmE-Era-EngA-EngB-Septin-like GTPase superfamily. EngA (Der) GTPase family. Associates with the 50S ribosomal subunit.

GTPase that plays an essential role in the late steps of ribosome biogenesis. This Synechococcus sp. (strain JA-3-3Ab) (Cyanobacteria bacterium Yellowstone A-Prime) protein is GTPase Der.